Here is a 741-residue protein sequence, read N- to C-terminus: Protein lin-54 homolog (741 aa).

The CRC domain maps to 513-626 (PRKPCNCTKS…KCIGCKNFEE (114 aa)). Residues 515-528 (KPCNCTKSLCLKLY) are DNA-binding. Zn(2+) is bound by residues cysteine 517, cysteine 519, cysteine 524, cysteine 529, cysteine 531, cysteine 538, cysteine 541, cysteine 543, and cysteine 546. The segment at 575–588 (IGKGKEGESDRRHS) is linker. Cysteine 591, cysteine 593, cysteine 598, cysteine 603, cysteine 605, cysteine 612, cysteine 616, cysteine 618, and cysteine 621 together coordinate Zn(2+). The tract at residues 591–604 (CNCKRSGCLKNYCE) is DNA-binding.

This sequence belongs to the lin-54 family. Component of the DREAM complex.

It localises to the nucleus. In terms of biological role, component of the DREAM complex, a multiprotein complex that can both act as a transcription activator or repressor depending on the context. Specifically recognizes the consensus motif 5'-TTYRAA-3' in target DNA. The protein is Protein lin-54 homolog (lin54) of Xenopus tropicalis (Western clawed frog).